Here is a 311-residue protein sequence, read N- to C-terminus: Aspartate carbamoyltransferase catalytic subunit (311 aa).

Carbamoyl phosphate contacts are provided by arginine 59 and threonine 60. Residue lysine 87 participates in L-aspartate binding. Carbamoyl phosphate-binding residues include arginine 109, histidine 139, and glutamine 142. 2 residues coordinate L-aspartate: arginine 172 and arginine 224. Carbamoyl phosphate contacts are provided by alanine 265 and proline 266.

This sequence belongs to the aspartate/ornithine carbamoyltransferase superfamily. ATCase family. Heterododecamer (2C3:3R2) of six catalytic PyrB chains organized as two trimers (C3), and six regulatory PyrI chains organized as three dimers (R2).

It carries out the reaction carbamoyl phosphate + L-aspartate = N-carbamoyl-L-aspartate + phosphate + H(+). It functions in the pathway pyrimidine metabolism; UMP biosynthesis via de novo pathway; (S)-dihydroorotate from bicarbonate: step 2/3. Its function is as follows. Catalyzes the condensation of carbamoyl phosphate and aspartate to form carbamoyl aspartate and inorganic phosphate, the committed step in the de novo pyrimidine nucleotide biosynthesis pathway. In Streptococcus pyogenes serotype M12 (strain MGAS2096), this protein is Aspartate carbamoyltransferase catalytic subunit.